The primary structure comprises 385 residues: 1-deoxy-D-xylulose 5-phosphate reductoisomerase (385 aa).

The NADPH site is built by Thr-10, Gly-11, Ser-12, Ile-13, Lys-37, and Asn-124. A 1-deoxy-D-xylulose 5-phosphate-binding site is contributed by Lys-125. Residue Glu-126 participates in NADPH binding. Asp-150 is a binding site for Mn(2+). 4 residues coordinate 1-deoxy-D-xylulose 5-phosphate: Ser-151, Glu-152, Ser-176, and His-199. Glu-152 provides a ligand contact to Mn(2+). Position 205 (Gly-205) interacts with NADPH. 4 residues coordinate 1-deoxy-D-xylulose 5-phosphate: Ser-212, Asn-217, Lys-218, and Glu-221. Glu-221 serves as a coordination point for Mn(2+).

The protein belongs to the DXR family. The cofactor is Mg(2+). Mn(2+) is required as a cofactor.

The catalysed reaction is 2-C-methyl-D-erythritol 4-phosphate + NADP(+) = 1-deoxy-D-xylulose 5-phosphate + NADPH + H(+). The protein operates within isoprenoid biosynthesis; isopentenyl diphosphate biosynthesis via DXP pathway; isopentenyl diphosphate from 1-deoxy-D-xylulose 5-phosphate: step 1/6. In terms of biological role, catalyzes the NADPH-dependent rearrangement and reduction of 1-deoxy-D-xylulose-5-phosphate (DXP) to 2-C-methyl-D-erythritol 4-phosphate (MEP). The protein is 1-deoxy-D-xylulose 5-phosphate reductoisomerase of Clostridium botulinum (strain Langeland / NCTC 10281 / Type F).